The sequence spans 201 residues: Small ribosomal subunit protein uS4c (201 aa).

The disordered stretch occupies residues 15-44 (LGALPGLTSKRPKTGNDLKNQSRSGKKSQY). Residues 89-150 (MRLDNILFRL…EKKSRTLIQN (62 aa)) enclose the S4 RNA-binding domain.

It belongs to the universal ribosomal protein uS4 family. Part of the 30S ribosomal subunit. Contacts protein S5. The interaction surface between S4 and S5 is involved in control of translational fidelity.

It is found in the plastid. Its subcellular location is the chloroplast. In terms of biological role, one of the primary rRNA binding proteins, it binds directly to 16S rRNA where it nucleates assembly of the body of the 30S subunit. Its function is as follows. With S5 and S12 plays an important role in translational accuracy. This is Small ribosomal subunit protein uS4c (rps4) from Cucumis sativus (Cucumber).